We begin with the raw amino-acid sequence, 137 residues long: Fatty acid-binding protein homolog 7 (137 aa).

It belongs to the calycin superfamily. Fatty-acid binding protein (FABP) family.

This is Fatty acid-binding protein homolog 7 (lbp-7) from Caenorhabditis elegans.